The following is a 424-amino-acid chain: FeMo cofactor biosynthesis protein NifB (424 aa).

The 250-residue stretch at 12-261 folds into the Radical SAM core domain; the sequence is NDSSRHTYGR…PQMKHCARCR (250 aa). [4Fe-4S] cluster-binding residues include Cys-30, Cys-34, and Cys-37. Positions 84, 136, and 188 each coordinate S-adenosyl-L-methionine. Residues Cys-257 and Cys-260 each contribute to the [4Fe-4S] cluster site.

Belongs to the radical SAM superfamily. NifB family. As to quaternary structure, monomer. Requires [4Fe-4S] cluster as cofactor.

It participates in cofactor biosynthesis; Fe-Mo cofactor biosynthesis. Its function is as follows. Involved in the biosynthesis of the iron-molybdenum cofactor (FeMo-co or M-cluster) found in the dinitrogenase enzyme of the nitrogenase complex in nitrogen-fixing microorganisms. NifB catalyzes the crucial step of radical SAM-dependent carbide insertion that occurs concomitant with the insertion of a 9th sulfur and the rearrangement/coupling of two [4Fe-4S] clusters into a [8Fe-9S-C] cluster, the precursor to the M-cluster. This Chlorobaculum tepidum (strain ATCC 49652 / DSM 12025 / NBRC 103806 / TLS) (Chlorobium tepidum) protein is FeMo cofactor biosynthesis protein NifB.